Reading from the N-terminus, the 416-residue chain is Probable glucan 1,3-beta-glucosidase A (416 aa).

An N-terminal signal peptide occupies residues methionine 1–alanine 22. Asparagine 183 is a glycosylation site (N-linked (GlcNAc...) asparagine). Glutamate 210 functions as the Proton donor in the catalytic mechanism. Cystine bridges form between cysteine 290–cysteine 415 and cysteine 316–cysteine 342. Catalysis depends on glutamate 308, which acts as the Nucleophile.

Belongs to the glycosyl hydrolase 5 (cellulase A) family. Monomer. Mn(2+) serves as cofactor.

The protein resides in the secreted. It carries out the reaction Successive hydrolysis of beta-D-glucose units from the non-reducing ends of (1-&gt;3)-beta-D-glucans, releasing alpha-glucose.. Functionally, beta-glucanases participate in the metabolism of beta-glucan, the main structural component of the cell wall. It could also function biosynthetically as a transglycosylase. The polypeptide is Probable glucan 1,3-beta-glucosidase A (exgA) (Aspergillus niger (strain ATCC MYA-4892 / CBS 513.88 / FGSC A1513)).